Reading from the N-terminus, the 77-residue chain is Large ribosomal subunit protein eL20 (77 aa).

Belongs to the eukaryotic ribosomal protein eL20 family. As to quaternary structure, part of the 50S ribosomal subunit. Binds 23S rRNA.

This is Large ribosomal subunit protein eL20 from Thermococcus onnurineus (strain NA1).